The chain runs to 296 residues: MGTETVVHDQARWAMAAMERRLAVAKAQLLQQQQQKNEKDKKGTSDVDVSMKESHQADSLPTPSKTSIKKVDPKDDDSVAYTKLSHPVDENLLATNVKFSSAKGTIVDKVLHNLLRSGDSAQKYLQGTKSVKLDNYILLDNFVQSRSSASGSKKASQKDSKRSKSRMSMKRLKKSGALHIPKDLQKFDLFKPMHGMWESYMMKLIKVTGKIQLSLTLLSADLHGAFMFVAECKIASFTGVQGIMVRETSETFGIITRDDKFRVVPKKLSVFIIQLDCWKITLHGDKFISRDNIVQR.

2 disordered regions span residues 29 to 74 and 148 to 173; these read LLQQ…VDPK and SASGSKKASQKDSKRSKSRMSMKRLK. The segment covering 36 to 56 has biased composition (basic and acidic residues); it reads KNEKDKKGTSDVDVSMKESHQ. Positions 57–66 are enriched in polar residues; that stretch reads ADSLPTPSKT. The Nuclear localization signal motif lies at 160–167; sequence SKRSKSRM. The span at 163–173 shows a compositional bias: basic residues; it reads SKSRMSMKRLK.

It belongs to the eukaryotic/archaeal RNase P protein component 1 family. In terms of assembly, component of nuclear RNase MRP complexes. Several subunits of RNase P are also part of the RNase MRP complex. RNase MRP consists of a catalytic RNA moiety and several protein subunits.

Its subcellular location is the nucleus. Component of the MRP ribonuclease complex, which cleaves pre-rRNA sequences. Required for rRNA maturation, including 5.8S rRNA processing. Seems not involved in tRNA maturation. The chain is Ribonuclease MRP protein subunit POP4 from Arabidopsis thaliana (Mouse-ear cress).